The sequence spans 141 residues: Transcription antitermination protein NusB (141 aa).

This sequence belongs to the NusB family.

Involved in transcription antitermination. Required for transcription of ribosomal RNA (rRNA) genes. Binds specifically to the boxA antiterminator sequence of the ribosomal RNA (rrn) operons. In Neisseria meningitidis serogroup C (strain 053442), this protein is Transcription antitermination protein NusB.